Consider the following 72-residue polypeptide: Mitotic-spindle organizing protein 1 (72 aa).

The protein belongs to the MOZART1 family. As to quaternary structure, part of the gamma-tubulin complex.

It localises to the cytoplasm. It is found in the cytoskeleton. The protein resides in the microtubule organizing center. Its subcellular location is the spindle pole body. Functionally, required for gamma-tubulin complex recruitment to the microtubule organizing center (MTOC). The sequence is that of Mitotic-spindle organizing protein 1 from Cryptococcus neoformans var. neoformans serotype D (strain B-3501A) (Filobasidiella neoformans).